We begin with the raw amino-acid sequence, 218 residues long: uncharacterized protein (218 aa).

7 consecutive transmembrane segments (helical) span residues 9–29 (LLVI…VIAM), 42–62 (AIIL…SAAV), 67–87 (IPFL…QLLI), 107–127 (TIVL…AGAS), 134–154 (VVIG…LIHI), 159–179 (IPLL…EMIV), and 192–212 (GTVE…ASIY).

This sequence belongs to the TerC family.

It localises to the cell membrane. This is an uncharacterized protein from Bacillus subtilis (strain 168).